A 189-amino-acid polypeptide reads, in one-letter code: GTP cyclohydrolase 1 (189 aa).

3 residues coordinate Zn(2+): C76, H79, and C149.

Belongs to the GTP cyclohydrolase I family. In terms of assembly, homomer.

The enzyme catalyses GTP + H2O = 7,8-dihydroneopterin 3'-triphosphate + formate + H(+). It participates in cofactor biosynthesis; 7,8-dihydroneopterin triphosphate biosynthesis; 7,8-dihydroneopterin triphosphate from GTP: step 1/1. This chain is GTP cyclohydrolase 1, found in Dehalococcoides mccartyi (strain ATCC BAA-2100 / JCM 16839 / KCTC 5957 / BAV1).